The primary structure comprises 203 residues: Probable Tat proofreading chaperone DmsD (203 aa).

The protein belongs to the TorD/DmsD family. DmsD subfamily.

In terms of biological role, required for biogenesis/assembly of DMSO reductase, but not for the interaction of the DmsA signal peptide with the Tat system. May be part of a chaperone cascade complex that facilitates a folding-maturation pathway for the substrate protein. This chain is Probable Tat proofreading chaperone DmsD, found in Haemophilus influenzae (strain ATCC 51907 / DSM 11121 / KW20 / Rd).